Consider the following 339-residue polypeptide: Probable cytosolic iron-sulfur protein assembly protein CIAO1 (339 aa).

7 WD repeats span residues 14 to 53 (HPDS…WICK), 59 to 98 (GHQR…FECV), 103 to 142 (GHEN…EYEC), 148 to 187 (SHTQ…WVCC), 192 to 231 (GHES…NEQG), 250 to 289 (FHSR…DPQQ), and 301 to 339 (AHSQ…PEGL). Positions 176–178 (LYR) match the LYR motif; required for interaction with HSC20 motif.

This sequence belongs to the WD repeat CIA1 family. Component of the CIA complex. Interacts with CIAO2A and forms a complex with CIAO2B and MMS19; the interactions with CIAO2A and CIAO2B are mutually exclusive. Interacts with CHD1L, ERCC2, IREB2 and POLD1. Component of the MMXD complex, which includes CIAO1, ERCC2, CIAO2B, MMS19 and SLC25A5. Interacts with WT1. Interacts with CIAO3. Interacts (via LYR motif) with HSC20.

The protein localises to the cytoplasm. Functionally, key component of the cytosolic iron-sulfur protein assembly (CIA) complex, a multiprotein complex that mediates the incorporation of iron-sulfur cluster into extramitochondrial Fe/S proteins. As a CIA complex component, interacts specifically with CIAO2A or CIAO2B and MMS19 to assist different branches of iron-sulfur protein assembly, depending of its interactors. The complex CIAO1:CIAO2B:MMS19 binds to and facilitates the assembly of most cytosolic-nuclear Fe/S proteins. CIAO1:CIAO2A specifically matures ACO1 and stabilizes IREB2. Seems to specifically modulate the transactivation activity of WT1. As part of the mitotic spindle-associated MMXD complex it may play a role in chromosome segregation. This chain is Probable cytosolic iron-sulfur protein assembly protein CIAO1, found in Homo sapiens (Human).